Consider the following 94-residue polypeptide: MSIKPLGDRVVIKRLEAEETTKSGIIVTGTAKERPQEAEVVAVGPGAIIDGKRTEMEVKIGDKVLYSKYAGTEVKFEGEEYTILRQDDILAIVE.

This sequence belongs to the GroES chaperonin family. In terms of assembly, heptamer of 7 subunits arranged in a ring. Interacts with the chaperonin GroEL.

Its subcellular location is the cytoplasm. In terms of biological role, together with the chaperonin GroEL, plays an essential role in assisting protein folding. The GroEL-GroES system forms a nano-cage that allows encapsulation of the non-native substrate proteins and provides a physical environment optimized to promote and accelerate protein folding. GroES binds to the apical surface of the GroEL ring, thereby capping the opening of the GroEL channel. This chain is Co-chaperonin GroES, found in Clostridium perfringens (strain SM101 / Type A).